A 1325-amino-acid chain; its full sequence is Protein PHYTOCHROME-DEPENDENT LATE-FLOWERING (1325 aa).

Polar residues-rich tracts occupy residues 313-331 (IGST…SVSG) and 504-515 (NFPQTSWNVNPG). Disordered regions lie at residues 313 to 371 (IGST…MPGL), 462 to 558 (EPFE…EFSG), 593 to 616 (ANEA…NSLP), 852 to 875 (VAGQ…NSTQ), and 1160 to 1325 (QQQQ…GNNS). Positions 518–529 (IEKEPKKEEQFS) are enriched in basic and acidic residues. The span at 596 to 607 (AMQQRQHQAQMA) shows a compositional bias: low complexity. A compositionally biased stretch (polar residues) spans 863–875 (HGNTGNTPNNSTQ). Over residues 1160–1224 (QQQQQQQLQQ…QQQATASPLQ (65 aa)) the composition is skewed to low complexity. Polar residues predominate over residues 1225 to 1239 (SVLSPPQVGSPSAGI). The segment covering 1240–1262 (TQQQLQQSSPQQMSQRTPMSPQQ) has biased composition (low complexity). Polar residues-rich tracts occupy residues 1263 to 1286 (VNQR…TSNL) and 1293 to 1325 (PQLS…GNNS).

In terms of assembly, component of a red light-dependent nuclear complex made of PHL, PHYB and CO. Interacts directly with PHYB and CO; CO binding requires the presence of PHYB. In terms of tissue distribution, mostly expressed in cotyledons and leaves, both in mesophyll and vasculature cells. Also present in roots, hypocotyls and shoot apices.

It localises to the nucleus. Its subcellular location is the nuclear body. The protein localises to the cytoplasmic granule. It is found in the cytoplasm. Triggers photoperiod-monitored flowering by repressing PHYB-dependent flowering negative regulation, probably through physical interactions with PHYB and CO. The chain is Protein PHYTOCHROME-DEPENDENT LATE-FLOWERING from Arabidopsis thaliana (Mouse-ear cress).